A 395-amino-acid chain; its full sequence is MSKIIAINAGSSSLKFQLFEMPSEKVLTKGLVERIGIADSVFTISVNGEKNTEVTDIPDHAVAVKMLLHKLTEFGIIKDLNEIDGIGHRVVHGGEKFSDSVLLTDETIREIEEISELAPLHNPANIVGIKAFKEVLPNVPAVAVFDTAFHQTMPEQSYLYSLPYEYYEKYGIRKYGFHGTSHKYVTQRAAELLGRPLEDLRLISCHLGNGASIAAVEGGKSIDTSMGFTPLAGVAMGTRSGNIDPALIPYIMEKTDQTADEVLNTLNKKSGLLGVSGFSSDLRDIVEASKEGNERAETALEVFASRIHKYIGSYAARMSGVDAIIFTAGIGENSVEVRERVLRGLEFMGVYWDPALNNVRGEEAFISYPHSPVKVMIIPTDEEVMIARDVVRLAQ.

Asn-8 serves as a coordination point for Mg(2+). Lys-15 provides a ligand contact to ATP. Arg-89 provides a ligand contact to substrate. Asp-146 (proton donor/acceptor) is an active-site residue. ATP contacts are provided by residues 206 to 210, 281 to 283, and 329 to 333; these read HLGNG, DLR, and GIGEN. Residue Glu-382 participates in Mg(2+) binding.

This sequence belongs to the acetokinase family. In terms of assembly, homodimer. Mg(2+) is required as a cofactor. The cofactor is Mn(2+).

The protein resides in the cytoplasm. It carries out the reaction acetate + ATP = acetyl phosphate + ADP. The protein operates within metabolic intermediate biosynthesis; acetyl-CoA biosynthesis; acetyl-CoA from acetate: step 1/2. Functionally, catalyzes the formation of acetyl phosphate from acetate and ATP. Can also catalyze the reverse reaction. This Bacillus velezensis (strain DSM 23117 / BGSC 10A6 / LMG 26770 / FZB42) (Bacillus amyloliquefaciens subsp. plantarum) protein is Acetate kinase.